The primary structure comprises 394 residues: NAD(P)H-quinone oxidoreductase subunit H (394 aa).

The protein belongs to the complex I 49 kDa subunit family. NDH-1 can be composed of about 15 different subunits; different subcomplexes with different compositions have been identified which probably have different functions.

It is found in the cellular thylakoid membrane. It carries out the reaction a plastoquinone + NADH + (n+1) H(+)(in) = a plastoquinol + NAD(+) + n H(+)(out). The catalysed reaction is a plastoquinone + NADPH + (n+1) H(+)(in) = a plastoquinol + NADP(+) + n H(+)(out). Its function is as follows. NDH-1 shuttles electrons from an unknown electron donor, via FMN and iron-sulfur (Fe-S) centers, to quinones in the respiratory and/or the photosynthetic chain. The immediate electron acceptor for the enzyme in this species is believed to be plastoquinone. Couples the redox reaction to proton translocation, and thus conserves the redox energy in a proton gradient. Cyanobacterial NDH-1 also plays a role in inorganic carbon-concentration. In Thermosynechococcus vestitus (strain NIES-2133 / IAM M-273 / BP-1), this protein is NAD(P)H-quinone oxidoreductase subunit H.